Reading from the N-terminus, the 271-residue chain is Murein DD-endopeptidase MepH (271 aa).

The N-terminal stretch at 1 to 27 is a signal peptide; sequence MARINRISITLCALLFTTLPLTPMAHA. The tract at residues 27 to 102 is disordered; sequence ASKQARESSA…KHAVNKTASA (76 aa). Residues 55-64 are compositionally biased toward basic residues; it reads KTQKTAKKAA. The span at 65-86 shows a compositional bias: low complexity; that stretch reads SKSTTKSKTASSVKKSSITASK. One can recognise a NlpC/P60 domain in the interval 138–265; sequence QKATKVAMNK…RHYVGARRVM (128 aa). The active-site Nucleophile is the cysteine 169. Residue histidine 224 is the Proton acceptor of the active site. Glutamine 236 is a catalytic residue.

This sequence belongs to the peptidase C40 family.

It functions in the pathway cell wall biogenesis; cell wall polysaccharide biosynthesis. A murein DD-endopeptidase with specificity for D-Ala-meso-diaminopimelic acid (mDAP) cross-links. Its role is probably to cleave D-Ala-mDAP cross-links to allow insertion of new glycans and thus cell wall expansion. Functionally redundant with MepM and MepH. Partially suppresses an mepS disruption mutant. This Escherichia coli (strain K12) protein is Murein DD-endopeptidase MepH (mepH).